We begin with the raw amino-acid sequence, 129 residues long: UPF0102 protein Cpar_0015 (129 aa).

Belongs to the UPF0102 family.

In Chlorobaculum parvum (strain DSM 263 / NCIMB 8327) (Chlorobium vibrioforme subsp. thiosulfatophilum), this protein is UPF0102 protein Cpar_0015.